Here is a 399-residue protein sequence, read N- to C-terminus: Succinyl-diaminopimelate desuccinylase (399 aa).

A Zn(2+)-binding site is contributed by histidine 80. Aspartate 82 is an active-site residue. Residue aspartate 113 participates in Zn(2+) binding. Catalysis depends on glutamate 147, which acts as the Proton acceptor. 3 residues coordinate Zn(2+): glutamate 148, glutamate 176, and histidine 366.

Belongs to the peptidase M20A family. DapE subfamily. In terms of assembly, homodimer. Requires Zn(2+) as cofactor. Co(2+) is required as a cofactor.

It catalyses the reaction N-succinyl-(2S,6S)-2,6-diaminopimelate + H2O = (2S,6S)-2,6-diaminopimelate + succinate. The protein operates within amino-acid biosynthesis; L-lysine biosynthesis via DAP pathway; LL-2,6-diaminopimelate from (S)-tetrahydrodipicolinate (succinylase route): step 3/3. In terms of biological role, catalyzes the hydrolysis of N-succinyl-L,L-diaminopimelic acid (SDAP), forming succinate and LL-2,6-diaminopimelate (DAP), an intermediate involved in the bacterial biosynthesis of lysine and meso-diaminopimelic acid, an essential component of bacterial cell walls. This chain is Succinyl-diaminopimelate desuccinylase, found in Colwellia psychrerythraea (strain 34H / ATCC BAA-681) (Vibrio psychroerythus).